A 332-amino-acid polypeptide reads, in one-letter code: Ribosomal RNA small subunit methyltransferase H (332 aa).

Residues 42-44 (GGH), Asp62, Phe86, Asp105, and Gln112 each bind S-adenosyl-L-methionine.

The protein belongs to the methyltransferase superfamily. RsmH family.

The protein localises to the cytoplasm. The catalysed reaction is cytidine(1402) in 16S rRNA + S-adenosyl-L-methionine = N(4)-methylcytidine(1402) in 16S rRNA + S-adenosyl-L-homocysteine + H(+). Its function is as follows. Specifically methylates the N4 position of cytidine in position 1402 (C1402) of 16S rRNA. The sequence is that of Ribosomal RNA small subunit methyltransferase H from Cupriavidus pinatubonensis (strain JMP 134 / LMG 1197) (Cupriavidus necator (strain JMP 134)).